A 234-amino-acid chain; its full sequence is Ribitol-5-phosphate cytidylyltransferase (234 aa).

Residues 7 to 10 (LAGG) and 79 to 85 (GSIVQKS) contribute to the CTP site.

It belongs to the IspD/TarI cytidylyltransferase family. TarI subfamily.

It catalyses the reaction D-ribitol 5-phosphate + CTP + H(+) = CDP-L-ribitol + diphosphate. It participates in cell wall biogenesis; poly(ribitol phosphate) teichoic acid biosynthesis. Catalyzes the transfer of the cytidylyl group of CTP to D-ribitol 5-phosphate. This chain is Ribitol-5-phosphate cytidylyltransferase, found in Lacticaseibacillus paracasei (strain ATCC 334 / BCRC 17002 / CCUG 31169 / CIP 107868 / KCTC 3260 / NRRL B-441) (Lactobacillus paracasei).